A 304-amino-acid chain; its full sequence is Protein UL24 homolog (304 aa).

This sequence belongs to the HHV-1 UL24 protein family.

The protein localises to the host cytoplasm. It is found in the host nucleus. The protein resides in the host Golgi apparatus. Its function is as follows. May play a role in the dispersal of host nucleolin from the nucleolus throughout the nucleus leading to a decrease in ribosome biogenesis. This Gallid herpesvirus 2 (strain Chicken/Md5/ATCC VR-987) (GaHV-2) protein is Protein UL24 homolog (MDV035).